We begin with the raw amino-acid sequence, 260 residues long: Putative protein phosphatase (260 aa).

In terms of domain architecture, PPM-type phosphatase spans 9 to 254 (FTGLSKKGPV…DNITAALVNL (246 aa)).

The enzyme catalyses O-phospho-L-seryl-[protein] + H2O = L-seryl-[protein] + phosphate. The catalysed reaction is O-phospho-L-threonyl-[protein] + H2O = L-threonyl-[protein] + phosphate. The protein is Putative protein phosphatase of Mycoplasma genitalium (strain ATCC 33530 / DSM 19775 / NCTC 10195 / G37) (Mycoplasmoides genitalium).